Consider the following 145-residue polypeptide: Deoxyuridine 5'-triphosphate nucleotidohydrolase (145 aa).

Residues 62 to 64 (RSG), N75, 79 to 81 (TVD), and K89 each bind substrate.

It belongs to the dUTPase family. Requires Mg(2+) as cofactor.

The catalysed reaction is dUTP + H2O = dUMP + diphosphate + H(+). Its pathway is pyrimidine metabolism; dUMP biosynthesis; dUMP from dCTP (dUTP route): step 2/2. This enzyme is involved in nucleotide metabolism: it produces dUMP, the immediate precursor of thymidine nucleotides and it decreases the intracellular concentration of dUTP so that uracil cannot be incorporated into DNA. The polypeptide is Deoxyuridine 5'-triphosphate nucleotidohydrolase (Helicobacter pylori (strain ATCC 700392 / 26695) (Campylobacter pylori)).